Here is a 320-residue protein sequence, read N- to C-terminus: 1-aminocyclopropane-1-carboxylate oxidase (320 aa).

The region spanning 154–254 (PTFGTKVSNY…RMSLASFYNP (101 aa)) is the Fe2OG dioxygenase domain. Fe cation contacts are provided by His178, Asp180, and His235.

It belongs to the iron/ascorbate-dependent oxidoreductase family. The cofactor is Fe cation.

The catalysed reaction is 1-aminocyclopropane-1-carboxylate + L-ascorbate + O2 = ethene + L-dehydroascorbate + hydrogen cyanide + CO2 + 2 H2O. The protein operates within alkene biosynthesis; ethylene biosynthesis via S-adenosyl-L-methionine; ethylene from S-adenosyl-L-methionine: step 2/2. The polypeptide is 1-aminocyclopropane-1-carboxylate oxidase (ACO) (Persea americana (Avocado)).